The chain runs to 245 residues: Adapter protein MecA (245 aa).

It belongs to the MecA family. Homodimer.

Its function is as follows. Enables the recognition and targeting of unfolded and aggregated proteins to the ClpC protease or to other proteins involved in proteolysis. This is Adapter protein MecA from Streptococcus pneumoniae (strain Hungary19A-6).